The following is a 390-amino-acid chain: 23S rRNA (uracil(747)-C(5))-methyltransferase RlmC (390 aa).

The [4Fe-4S] cluster site is built by cysteine 12, cysteine 20, cysteine 23, and cysteine 100. S-adenosyl-L-methionine is bound by residues glutamine 225, phenylalanine 254, glutamate 275, and asparagine 322. Cysteine 349 serves as the catalytic Nucleophile.

The protein belongs to the class I-like SAM-binding methyltransferase superfamily. RNA M5U methyltransferase family. RlmC subfamily.

It catalyses the reaction uridine(747) in 23S rRNA + S-adenosyl-L-methionine = 5-methyluridine(747) in 23S rRNA + S-adenosyl-L-homocysteine + H(+). In terms of biological role, catalyzes the formation of 5-methyl-uridine at position 747 (m5U747) in 23S rRNA. The polypeptide is 23S rRNA (uracil(747)-C(5))-methyltransferase RlmC (Shewanella baltica (strain OS155 / ATCC BAA-1091)).